A 171-amino-acid chain; its full sequence is Protein phosphatase 1 regulatory subunit 1A (171 aa).

N-acetylmethionine is present on Met-1. The segment at 9–12 is essential for activity; that stretch reads KIQF. Positions 17-171 are disordered; that stretch reads LEPHLDPEAA…PLDSQGASLV (155 aa). The segment covering 19-29 has biased composition (basic and acidic residues); that stretch reads PHLDPEAAEQI. Position 35 is a phosphothreonine; by PKA (Thr-35). Positions 42 to 54 are essential for activity; it reads TSDQSSPEVDEDR. 4 positions are modified to phosphoserine: Ser-43, Ser-46, Ser-47, and Ser-67. The span at 122–133 shows a compositional bias: polar residues; that stretch reads GSASRPDTSGTA. A compositionally biased stretch (basic and acidic residues) spans 137 to 148; sequence AESKPKTQEQRG. Residues 143 to 171 are interaction with PPP1R15A; sequence TQEQRGVEPSTEDLSAHMLPLDSQGASLV.

This sequence belongs to the protein phosphatase inhibitor 1 family. Interacts with PPP1R15A. In terms of processing, phosphorylation of Thr-35 is required for activity.

Inhibitor of protein-phosphatase 1. This protein may be important in hormonal control of glycogen metabolism. Hormones that elevate intracellular cAMP increase I-1 activity in many tissues. I-1 activation may impose cAMP control over proteins that are not directly phosphorylated by PKA. Following a rise in intracellular calcium, I-1 is inactivated by calcineurin (or PP2B). Does not inhibit type-2 phosphatases. The polypeptide is Protein phosphatase 1 regulatory subunit 1A (Ppp1r1a) (Rattus norvegicus (Rat)).